The chain runs to 100 residues: Vesicle-associated membrane protein 8 (100 aa).

The residue at position 1 (methionine 1) is an N-acetylmethionine. Over 1 to 75 (MEEASEGGGN…ARKFWWKNVK (75 aa)) the chain is Cytoplasmic. Phosphoserine occurs at positions 5 and 18. The region spanning 12-72 (RVRNLQSEVE…QKVARKFWWK (61 aa)) is the v-SNARE coiled-coil homology domain. Threonine 28, threonine 48, and threonine 54 each carry phosphothreonine. At serine 55 the chain carries Phosphoserine. Residues lysine 64 and lysine 68 are each lipidated ((Microbial infection) N6-stearoyl lysine). A helical; Anchor for type IV membrane protein membrane pass occupies residues 76-96 (MIVLICVIVFIIILFIVLFAT). At 97–100 (GAFS) the chain is on the vesicular side.

Belongs to the synaptobrevin family. Forms a SNARE complex composed of VAMP8, SNAP29 and STX17 involved in fusion of autophagosome with lysosome. Found in a number of SNARE complexes with NAPA, SNAP23, SNAP25, STX1A, STX4, STX7, STX8 and VTI1B. Interacts with PICALM. SNARE complex formation and binding by PICALM are mutually exclusive processes for VAMP8. Interacts with SBF2/MTMR13. Interacts with RAB21 (in GTP-bound form) in response to starvation; the interaction probably regulates VAMP8 endolysosomal trafficking. Interacts with STX17; this interaction is increased in the absence of TMEM39A. Interacts with TRIM6. In terms of assembly, (Microbial infection) The interaction with STX17 is decreased in presence of SARS coronavirus-2/SARS-CoV-2 ORF3A protein. (Microbial infection) Stearoylated By S.flexneri N-epsilon-fatty acyltransferase IcsB, thereby disrupting the host actin cytoskeleton. Platelets.

The protein resides in the lysosome membrane. It is found in the early endosome membrane. It localises to the late endosome membrane. Its subcellular location is the cell membrane. The protein localises to the zymogen granule membrane. SNAREs, soluble N-ethylmaleimide-sensitive factor-attachment protein receptors, are essential proteins for fusion of cellular membranes. SNAREs localized on opposing membranes assemble to form a trans-SNARE complex, an extended, parallel four alpha-helical bundle that drives membrane fusion. VAMP8 is a SNARE involved in autophagy through the direct control of autophagosome membrane fusion with the lysososome membrane via its interaction with the STX17-SNAP29 binary t-SNARE complex. Also required for dense-granule secretion in platelets. Also plays a role in regulated enzyme secretion in pancreatic acinar cells. Involved in the abscission of the midbody during cell division, which leads to completely separate daughter cells. Involved in the homotypic fusion of early and late endosomes. Also participates in the activation of type I interferon antiviral response through a TRIM6-dependent mechanism. The protein is Vesicle-associated membrane protein 8 of Homo sapiens (Human).